Reading from the N-terminus, the 361-residue chain is Allatostatin-A receptor (361 aa).

Residues 1 to 46 (MESTEDEFYTICLNLTAEDPSFGNCNYTTDFENGELLEKVVSRVVP) lie on the Extracellular side of the membrane. N-linked (GlcNAc...) asparagine glycosylation is found at Asn-14 and Asn-26. The helical transmembrane segment at 47–67 (IFFGFIGIVGLVGNALVVLVV) threads the bilayer. The Cytoplasmic segment spans residues 68 to 78 (AANPGMRSTTN). Residues 79 to 99 (LLIINLAVADLLFVIFCVPFT) traverse the membrane as a helical segment. At 100 to 116 (ATDYVMPRWPFGDWWCK) the chain is on the extracellular side. An intrachain disulfide couples Cys-115 to Cys-196. A helical membrane pass occupies residues 117–137 (VVQYFIVVTAHASVYTLVLMS). Over 138–158 (LDRFMAVVHPIASMSIRTEKN) the chain is Cytoplasmic. A helical transmembrane segment spans residues 159-179 (ALLAIACIWVVILTTAIPVGI). Residues 180 to 212 (CHGEREYSYFNRNHSSCVFLEERGYSKLGFQMS) are Extracellular-facing. Residue Asn-192 is glycosylated (N-linked (GlcNAc...) asparagine). A helical membrane pass occupies residues 213 to 233 (FFLSSYVIPLALISVLYMCML). The Cytoplasmic segment spans residues 234–259 (TRLWKSAPGGRVSAESRRGRKKVTRM). A helical membrane pass occupies residues 260 to 280 (VVVVVVVFAVCWCPIQIILLV). Over 281–296 (KALNKYHITYFTVTAQ) the chain is Extracellular. The chain crosses the membrane as a helical span at residues 297 to 317 (IVSHVLAYMNSCVNPVLYAFL). At 318–361 (SENFRVAFRKVMYCPPPYNDGFSGRPQATKTTRTGNGNSCHDIV) the chain is on the cytoplasmic side. A disordered region spans residues 341-361 (GRPQATKTTRTGNGNSCHDIV). Polar residues predominate over residues 343–361 (PQATKTTRTGNGNSCHDIV).

The protein belongs to the G-protein coupled receptor 1 family. As to expression, expressed in the midgut and, to a lesser extent, in the fore- and hindgut of fifth instar larvae. Also highly expressed in the brain of fourth and fifth instar larvae.

Its subcellular location is the cell membrane. Acts as a receptor for A-type allatostatin neuropeptide hormones. The polypeptide is Allatostatin-A receptor (Bombyx mori (Silk moth)).